Reading from the N-terminus, the 300-residue chain is LHMIHLHWYQYPPMNPMMYPLLLVFMLITGILCLAGNFVTIWVFMNTKSLRTPANLLVVNLAMSDFLMMFTMFPPMMVTCYYHTWTLGATFCQVYAFLGNLCGCASIWTMVFITFDRYNVIVKGVAGEPLSTKKASLWILTIWILSITWCIAPFFGWNRYVPEGNTGCGTDYLSEDILSRSYLYIYSTWVYFLPLAITIYCHVFIIKAVAAHEKGMRDQAKKMGIKSLRNEEAQKTSAECRLAKIAMTTVALWFIAWTPYLLINWVGMFARSYLSPVYTIWGYVFAKANAVYNPIVYAIS.

Residues 1–18 lie on the Extracellular side of the membrane; that stretch reads LHMIHLHWYQYPPMNPMM. Residues 19–43 form a helical membrane-spanning segment; sequence YPLLLVFMLITGILCLAGNFVTIWV. Residues 44–55 are Cytoplasmic-facing; it reads FMNTKSLRTPAN. The chain crosses the membrane as a helical span at residues 56-78; that stretch reads LLVVNLAMSDFLMMFTMFPPMMV. Over 79-92 the chain is Extracellular; that stretch reads TCYYHTWTLGATFC. Residues C92 and C168 are joined by a disulfide bond. Residues 93–115 form a helical membrane-spanning segment; sequence QVYAFLGNLCGCASIWTMVFITF. Positions 116–118 match the 'Ionic lock' involved in activated form stabilization motif; the sequence is DRY. Residues 116-134 lie on the Cytoplasmic side of the membrane; that stretch reads DRYNVIVKGVAGEPLSTKK. Residues 135 to 155 traverse the membrane as a helical segment; the sequence is ASLWILTIWILSITWCIAPFF. Topologically, residues 156 to 181 are extracellular; that stretch reads GWNRYVPEGNTGCGTDYLSEDILSRS. Residues 182–203 form a helical membrane-spanning segment; the sequence is YLYIYSTWVYFLPLAITIYCHV. Topologically, residues 204-244 are cytoplasmic; the sequence is FIIKAVAAHEKGMRDQAKKMGIKSLRNEEAQKTSAECRLAK. Residues 245 to 266 traverse the membrane as a helical segment; the sequence is IAMTTVALWFIAWTPYLLINWV. At 267-277 the chain is on the extracellular side; that stretch reads GMFARSYLSPV. Residues 278 to 299 traverse the membrane as a helical segment; the sequence is YTIWGYVFAKANAVYNPIVYAI. An N6-(retinylidene)lysine modification is found at K287.

It belongs to the G-protein coupled receptor 1 family. Opsin subfamily. Homodimer. Interacts with GNAQ. In terms of processing, contains one covalently linked retinal chromophore.

Its subcellular location is the cell projection. The protein resides in the rhabdomere membrane. Photoreceptor required for image-forming vision at low light intensity. Can use both retinal and 3-dehydroretinal as visual pigment. Light-induced isomerization of 11-cis to all-trans retinal triggers a conformational change that activates signaling via G-proteins. Signaling via GNAQ probably mediates the activation of phospholipase C. This chain is Rhodopsin (RHO), found in Cambarus maculatus (Freckled crayfish).